The chain runs to 991 residues: Regulator of telomere elongation helicase 1 homolog (991 aa).

In terms of domain architecture, Helicase ATP-binding spans 7–319 (NGIPVNFPFE…DDLVLLKEIL (313 aa)). An ATP-binding site is contributed by 42-49 (SPTGTGKT). [4Fe-4S] cluster contacts are provided by cysteine 148, cysteine 166, cysteine 175, and cysteine 211. The short motif at 254–257 (DEAH) is the DEAH box element. Positions 812 to 833 (SMKVNPHSRSTKSAGDDAEAGG) are disordered.

This sequence belongs to the helicase family. RAD3/XPD subfamily.

The protein resides in the nucleus. It carries out the reaction ATP + H2O = ADP + phosphate + H(+). A probable ATP-dependent DNA helicase implicated in DNA repair and the maintenance of genomic stability. Acts as an anti-recombinase to counteract toxic recombination and limit crossover during meiosis. Regulates meiotic recombination and crossover homeostasis by physically dissociating strand invasion events and thereby promotes noncrossover repair by meiotic synthesis dependent strand annealing (SDSA) as well as disassembly of D loop recombination intermediates. In Anopheles gambiae (African malaria mosquito), this protein is Regulator of telomere elongation helicase 1 homolog.